Reading from the N-terminus, the 299-residue chain is Protein phosphatase 1 regulatory subunit 3D (299 aa).

The segment at 1–22 (MSRGPSSAVLPSALGSRKLGPR) is disordered. Residues Ser23, Ser25, and Ser28 each carry the phosphoserine modification. The segment at 37–94 (EPRACRPPGSPGRAPPPTPAPSGCDPRLRPIILRRARSLPSSPERRQKAAGAPGAACR) is disordered. Pro residues predominate over residues 44-56 (PGSPGRAPPPTPA). Over residues 57 to 67 (PSGCDPRLRPI) the composition is skewed to low complexity. Phosphoserine is present on Ser74. Positions 85–94 (AAGAPGAACR) are enriched in low complexity. The short motif at 101–104 (LRVR) is the PP1-binding motif element. Ser133 is modified (phosphoserine). The CBM21 domain maps to 169–278 (GERLQRQLVC…NNDHRDYSLT (110 aa)).

In terms of assembly, interacts with PPP1CC catalytic subunit of PP1, and associates with glycogen. Interacts with EPM2A; in the presence of NHLC1/malin the interaction leads to PPP1R3D ubiquitination and autophagic degradation. Expressed in all tissues tested. High expression in skeletal muscle and heart.

Its function is as follows. Seems to act as a glycogen-targeting subunit for PP1. PP1 is essential for cell division, and participates in the regulation of glycogen metabolism, muscle contractility and protein synthesis. This Homo sapiens (Human) protein is Protein phosphatase 1 regulatory subunit 3D (PPP1R3D).